The chain runs to 342 residues: Protein-glutamate methylesterase/protein-glutamine glutaminase 2 (342 aa).

Residues 2–119 (NIGIVNDLPL…GGSADPSQPL (118 aa)) enclose the Response regulatory domain. Position 53 is a 4-aspartylphosphate (D53). The CheB-type methylesterase domain occupies 144–337 (PAPQGALPPL…DQLISLVQRN (194 aa)). Active-site residues include S159, H186, and D279.

Belongs to the CheB family. Post-translationally, phosphorylated by CheA. Phosphorylation of the N-terminal regulatory domain activates the methylesterase activity.

Its subcellular location is the cytoplasm. The catalysed reaction is [protein]-L-glutamate 5-O-methyl ester + H2O = L-glutamyl-[protein] + methanol + H(+). It catalyses the reaction L-glutaminyl-[protein] + H2O = L-glutamyl-[protein] + NH4(+). Its function is as follows. Involved in chemotaxis. Part of a chemotaxis signal transduction system that modulates chemotaxis in response to various stimuli. Catalyzes the demethylation of specific methylglutamate residues introduced into the chemoreceptors (methyl-accepting chemotaxis proteins or MCP) by CheR. Also mediates the irreversible deamidation of specific glutamine residues to glutamic acid. This chain is Protein-glutamate methylesterase/protein-glutamine glutaminase 2, found in Burkholderia mallei (strain ATCC 23344).